Here is a 1164-residue protein sequence, read N- to C-terminus: DNA-directed RNA polymerase (1164 aa).

The protein belongs to the RNA polymerase beta chain family. The DNA-dependent RNA polymerase used for intermediate and late genes expression consists of eight subunits 147 kDa, 133 kDa, 35 kDa, 30 kDa, 22 kDa, 19 kDa, 18 kDa and 7 kDa totalling more than 500 kDa in mass. The same holoenzyme, with the addition of the transcription-specificity factor RAP94, is used for early gene expression.

The protein resides in the virion. It catalyses the reaction RNA(n) + a ribonucleoside 5'-triphosphate = RNA(n+1) + diphosphate. Functionally, part of the DNA-dependent RNA polymerase which catalyzes the transcription of viral DNA into RNA using the four ribonucleoside triphosphates as substrates. Responsible for the transcription of early, intermediate and late genes. DNA-dependent RNA polymerase associates with the early transcription factor (ETF), itself composed of OPG118 and OPG133, thereby allowing the early genes transcription. Late transcription, and probably also intermediate transcription, require newly synthesized RNA polymerase. This is DNA-directed RNA polymerase (OPG151) from Monkeypox virus.